We begin with the raw amino-acid sequence, 145 residues long: LIM domain only protein 3 (145 aa).

LIM zinc-binding domains are found at residues 11-73 and 75-137; these read KGCA…LFGV and GNCA…GLMK.

This is LIM domain only protein 3 from Danio rerio (Zebrafish).